The primary structure comprises 450 residues: Tubulin alpha-3 chain (450 aa).

Glutamine 11 contributes to the GTP binding site. An N6-acetyllysine modification is found at lysine 40. 7 residues coordinate GTP: glutamate 71, serine 140, glycine 144, threonine 145, threonine 179, asparagine 206, and asparagine 228. Glutamate 71 is a binding site for Mg(2+). Residue glutamate 254 is part of the active site.

This sequence belongs to the tubulin family. Dimer of alpha and beta chains. A typical microtubule is a hollow water-filled tube with an outer diameter of 25 nm and an inner diameter of 15 nM. Alpha-beta heterodimers associate head-to-tail to form protofilaments running lengthwise along the microtubule wall with the beta-tubulin subunit facing the microtubule plus end conferring a structural polarity. Microtubules usually have 13 protofilaments but different protofilament numbers can be found in some organisms and specialized cells. Mg(2+) serves as cofactor. Undergoes a tyrosination/detyrosination cycle, the cyclic removal and re-addition of a C-terminal tyrosine residue by the enzymes tubulin tyrosine carboxypeptidase (TTCP) and tubulin tyrosine ligase (TTL), respectively. Post-translationally, acetylation of alpha chains at Lys-40 stabilizes microtubules and affects affinity and processivity of microtubule motors. This modification has a role in multiple cellular functions, ranging from cell motility, cell cycle progression or cell differentiation to intracellular trafficking and signaling. During the early stages of oogenesis lky/Alpha-tubulin N-acetyltransferase 2 is the main acetyltransferase responsible for Lys-40 acetylation in germline cells while Atat/alpha-tubulin N-acetyltransferase 1 is the main acetyltransferase responsible for Lys-40 acetylation in somatic cells.

It localises to the cytoplasm. It is found in the cytoskeleton. It catalyses the reaction GTP + H2O = GDP + phosphate + H(+). Tubulin is the major constituent of microtubules, a cylinder consisting of laterally associated linear protofilaments composed of alpha- and beta-tubulin heterodimers. Microtubules grow by the addition of GTP-tubulin dimers to the microtubule end, where a stabilizing cap forms. Below the cap, tubulin dimers are in GDP-bound state, owing to GTPase activity of alpha-tubulin. This Drosophila melanogaster (Fruit fly) protein is Tubulin alpha-3 chain (alphaTub84D).